A 697-amino-acid chain; its full sequence is PHD finger protein At1g33420 (697 aa).

The PHD-type zinc finger occupies 603-653; that stretch reads KVDCKCGTKDDDGERMLACDGCGVWHHTRCIGINNADALPSKFLCFRCIEL.

The protein localises to the nucleus. The polypeptide is PHD finger protein At1g33420 (Arabidopsis thaliana (Mouse-ear cress)).